The chain runs to 418 residues: Glutamyl-tRNA reductase (418 aa).

Substrate-binding positions include 49-52, Ser-106, 111-113, and Gln-117; these read TCNR and EPQ. Residue Cys-50 is the Nucleophile of the active site. Residue 186 to 191 coordinates NADP(+); sequence GAGEMI.

The protein belongs to the glutamyl-tRNA reductase family. In terms of assembly, homodimer.

It catalyses the reaction (S)-4-amino-5-oxopentanoate + tRNA(Glu) + NADP(+) = L-glutamyl-tRNA(Glu) + NADPH + H(+). Its pathway is porphyrin-containing compound metabolism; protoporphyrin-IX biosynthesis; 5-aminolevulinate from L-glutamyl-tRNA(Glu): step 1/2. In terms of biological role, catalyzes the NADPH-dependent reduction of glutamyl-tRNA(Glu) to glutamate 1-semialdehyde (GSA). The chain is Glutamyl-tRNA reductase from Alcanivorax borkumensis (strain ATCC 700651 / DSM 11573 / NCIMB 13689 / SK2).